A 234-amino-acid chain; its full sequence is Urease accessory protein UreF (234 aa).

It belongs to the UreF family. As to quaternary structure, ureD, UreF and UreG form a complex that acts as a GTP-hydrolysis-dependent molecular chaperone, activating the urease apoprotein by helping to assemble the nickel containing metallocenter of UreC. The UreE protein probably delivers the nickel.

Its subcellular location is the cytoplasm. In terms of biological role, required for maturation of urease via the functional incorporation of the urease nickel metallocenter. The protein is Urease accessory protein UreF of Kocuria rhizophila (strain ATCC 9341 / DSM 348 / NBRC 103217 / DC2201).